Reading from the N-terminus, the 262-residue chain is Cytochrome c oxidase subunit 3 (262 aa).

7 helical membrane-spanning segments follow: residues 13–33, 38–58, 82–102, 134–154, 159–179, 200–220, and 237–257; these read PWPL…VMYM, GGGL…YVWW, GMLL…WAFF, TIIL…ILAG, GIIS…FQAL, ATGF…VCLF, and AAAW…VCIY.

Belongs to the cytochrome c oxidase subunit 3 family. In terms of assembly, component of the cytochrome c oxidase (complex IV, CIV), a multisubunit enzyme composed of a catalytic core of 3 subunits and several supernumerary subunits. The complex exists as a monomer or a dimer and forms supercomplexes (SCs) in the inner mitochondrial membrane with ubiquinol-cytochrome c oxidoreductase (cytochrome b-c1 complex, complex III, CIII).

The protein localises to the mitochondrion inner membrane. The enzyme catalyses 4 Fe(II)-[cytochrome c] + O2 + 8 H(+)(in) = 4 Fe(III)-[cytochrome c] + 2 H2O + 4 H(+)(out). Component of the cytochrome c oxidase, the last enzyme in the mitochondrial electron transport chain which drives oxidative phosphorylation. The respiratory chain contains 3 multisubunit complexes succinate dehydrogenase (complex II, CII), ubiquinol-cytochrome c oxidoreductase (cytochrome b-c1 complex, complex III, CIII) and cytochrome c oxidase (complex IV, CIV), that cooperate to transfer electrons derived from NADH and succinate to molecular oxygen, creating an electrochemical gradient over the inner membrane that drives transmembrane transport and the ATP synthase. Cytochrome c oxidase is the component of the respiratory chain that catalyzes the reduction of oxygen to water. Electrons originating from reduced cytochrome c in the intermembrane space (IMS) are transferred via the dinuclear copper A center (CU(A)) of subunit 2 and heme A of subunit 1 to the active site in subunit 1, a binuclear center (BNC) formed by heme A3 and copper B (CU(B)). The BNC reduces molecular oxygen to 2 water molecules using 4 electrons from cytochrome c in the IMS and 4 protons from the mitochondrial matrix. This Prototheca wickerhamii protein is Cytochrome c oxidase subunit 3 (COX3).